Here is a 376-residue protein sequence, read N- to C-terminus: tRNA 2-selenouridine synthase (376 aa).

The 124-residue stretch at 15 to 138 (FVAGKPLIDL…MRQYLIGVIE (124 aa)) folds into the Rhodanese domain. Cys98 (S-selanylcysteine intermediate) is an active-site residue.

This sequence belongs to the SelU family. Monomer.

It catalyses the reaction 5-methylaminomethyl-2-thiouridine(34) in tRNA + selenophosphate + (2E)-geranyl diphosphate + H2O + H(+) = 5-methylaminomethyl-2-selenouridine(34) in tRNA + (2E)-thiogeraniol + phosphate + diphosphate. The enzyme catalyses 5-methylaminomethyl-2-thiouridine(34) in tRNA + (2E)-geranyl diphosphate = 5-methylaminomethyl-S-(2E)-geranyl-thiouridine(34) in tRNA + diphosphate. It carries out the reaction 5-methylaminomethyl-S-(2E)-geranyl-thiouridine(34) in tRNA + selenophosphate + H(+) = 5-methylaminomethyl-2-(Se-phospho)selenouridine(34) in tRNA + (2E)-thiogeraniol. The catalysed reaction is 5-methylaminomethyl-2-(Se-phospho)selenouridine(34) in tRNA + H2O = 5-methylaminomethyl-2-selenouridine(34) in tRNA + phosphate. Involved in the post-transcriptional modification of the uridine at the wobble position (U34) of tRNA(Lys), tRNA(Glu) and tRNA(Gln). Catalyzes the conversion of 2-thiouridine (S2U-RNA) to 2-selenouridine (Se2U-RNA). Acts in a two-step process involving geranylation of 2-thiouridine (S2U) to S-geranyl-2-thiouridine (geS2U) and subsequent selenation of the latter derivative to 2-selenouridine (Se2U) in the tRNA chain. The chain is tRNA 2-selenouridine synthase from Shewanella oneidensis (strain ATCC 700550 / JCM 31522 / CIP 106686 / LMG 19005 / NCIMB 14063 / MR-1).